Reading from the N-terminus, the 1377-residue chain is DNA-directed RNA polymerase subunit beta' (1377 aa).

Positions 60, 62, 75, and 78 each coordinate Zn(2+). Mg(2+) contacts are provided by Asp-449, Asp-451, and Asp-453. Cys-777, Cys-851, Cys-858, and Cys-861 together coordinate Zn(2+).

The protein belongs to the RNA polymerase beta' chain family. The RNAP catalytic core consists of 2 alpha, 1 beta, 1 beta' and 1 omega subunit. When a sigma factor is associated with the core the holoenzyme is formed, which can initiate transcription. It depends on Mg(2+) as a cofactor. The cofactor is Zn(2+).

The catalysed reaction is RNA(n) + a ribonucleoside 5'-triphosphate = RNA(n+1) + diphosphate. DNA-dependent RNA polymerase catalyzes the transcription of DNA into RNA using the four ribonucleoside triphosphates as substrates. This is DNA-directed RNA polymerase subunit beta' from Borreliella burgdorferi (strain ZS7) (Borrelia burgdorferi).